We begin with the raw amino-acid sequence, 1128 residues long: Nck-associated protein 1 (1128 aa).

The disordered stretch occupies residues 640–665 (AVNKKSKKQTGKKGEPEREKPGVESM). A compositionally biased stretch (basic and acidic residues) spans 651-665 (KKGEPEREKPGVESM). A helical membrane pass occupies residues 995-1015 (IACLLMVFVAVSLPTLASNVM).

The protein belongs to the HEM-1/HEM-2 family.

The protein localises to the cell membrane. The protein resides in the cell projection. Its subcellular location is the lamellipodium membrane. Part of the WAVE complex that regulates lamellipodia formation. The WAVE complex regulates actin filament reorganization via its interaction with the Arp2/3 complex. Actin remodeling activity is regulated by RAC1. Plays a role in neural tube closure. This Xenopus laevis (African clawed frog) protein is Nck-associated protein 1 (nckap1).